Here is a 227-residue protein sequence, read N- to C-terminus: Glutathione S-transferase U17 (227 aa).

The GST N-terminal domain maps to 4–83; sequence SDVKLIGAWA…YIDDTWSSSG (80 aa). Residues 14–15, 40–41, 54–55, and 67–68 contribute to the glutathione site; these read SP, SK, KI, and ES. One can recognise a GST C-terminal domain in the interval 90 to 222; it reads DPYDRAMARF…KLAEFAKKIF (133 aa).

It belongs to the GST superfamily. Tau family.

The protein localises to the cytoplasm. The protein resides in the cytosol. The enzyme catalyses RX + glutathione = an S-substituted glutathione + a halide anion + H(+). Its function is as follows. Involved in light signaling, mainly phyA-mediated photomorphogenesis and in the integration of various phytohormone signals to modulate various aspects of plant development by affecting glutathione pools. In vitro, possesses glutathione S-transferase activity toward 1-chloro-2,4-dinitrobenzene (CDNB) and benzyl isothiocyanate (BITC). The chain is Glutathione S-transferase U17 (GSTU17) from Arabidopsis thaliana (Mouse-ear cress).